The chain runs to 303 residues: METVRIATRKSPLALWQSEHVADRLRQAHPGLHVELVPMSTRGDEVLDRSLAAIGGKGLFLKELELAMLRGEADCAVHSLKDVPMELDEPFALPAMLTRHDPADGFVSNLYASLDALPIGARVGTSSLRRQAQLRALRPDLQLLDLRGNVNTRLAKLDNGGYDAIVLAVAGLERLGLGERIVARLQPPQWLPAPAQGAVAVECDGSNARLMALFAGLDDAATRACVEAERAMNRALHGSCHVPVAAIAQWQGQDLHLQGLVGSASDGRAVRAEAVGPASDPEVLGQRVAKMLLDAGAGELLNV.

Cys240 carries the post-translational modification S-(dipyrrolylmethanemethyl)cysteine.

Belongs to the HMBS family. Monomer. The cofactor is dipyrromethane.

The catalysed reaction is 4 porphobilinogen + H2O = hydroxymethylbilane + 4 NH4(+). Its pathway is porphyrin-containing compound metabolism; protoporphyrin-IX biosynthesis; coproporphyrinogen-III from 5-aminolevulinate: step 2/4. In terms of biological role, tetrapolymerization of the monopyrrole PBG into the hydroxymethylbilane pre-uroporphyrinogen in several discrete steps. The protein is Porphobilinogen deaminase of Stenotrophomonas maltophilia (strain R551-3).